The primary structure comprises 157 residues: AM-toxin biosynthesis protein 15 (157 aa).

Positions 17 to 43 (RARHWDSKQGSSNSDVASGGSEVAGNS) are disordered.

Its pathway is mycotoxin biosynthesis. Its function is as follows. Part of the gene clusters that mediate the biosynthesis of AM-toxins, host-selective toxins (HSTs) causing Alternaria blotch on apple, a worldwide distributed disease. AM-toxins are cyclic depsipeptides containing the 3 residues 2-hydroxy-isovaleric acid (2-HIV), dehydroalanine, L-alanine which are common for all 3 AM-toxins I to III. The fourth precursor is L-alpha-amino-methoxyphenyl-valeric acid (L-Amv) for AM-toxin I, L-alpha-amino-phenyl-valeric acid (L-Apv) for AM-toxin II, and L-alpha-amino-hydroxyphenyl-valeric acid (L-Ahv) for AM-toxin III. AM-toxins have two target sites for affecting susceptible apple cells; they cause invagination of the plasma membrane and electrolyte loss and chloroplast disorganization. The non-ribosomal peptide synthetase AMT1 contains 4 catalytic modules and is responsible for activation of each residue in AM-toxin. The aldo-keto reductase AMT2 catalyzes the conversion of 2-keto-isovaleric acid (2-KIV) to 2-hydroxy-isovaleric acid (2-HIV), one of the precursor residues incorporated by AMT1 during AM-toxin biosynthesis, by reduction of its ketone to an alcohol. The cytochrome P450 monooxygenase AMT3 and the thioesterase AMT4 are also important for AM-toxin production, but their exact function within the AM-toxin biosynthesis are not known yet. Up to 21 proteins (including AMT1 to AMT4) are predicted to be involved in AM-toxin biosynthesis since their expression ishighly up-regulated in AM-toxin-producing cultures. In Alternaria alternata (Alternaria rot fungus), this protein is AM-toxin biosynthesis protein 15.